An 85-amino-acid chain; its full sequence is Large ribosomal subunit protein bL27 (85 aa).

The segment at 1 to 21 (MAHKKAGGSTRNGRDSNAQRL) is disordered. Residues 9-19 (STRNGRDSNAQ) show a composition bias toward polar residues.

This sequence belongs to the bacterial ribosomal protein bL27 family.

The chain is Large ribosomal subunit protein bL27 from Pectobacterium carotovorum subsp. carotovorum (strain PC1).